We begin with the raw amino-acid sequence, 299 residues long: tRNA dimethylallyltransferase (299 aa).

11-18 (GPTAVGKT) serves as a coordination point for ATP. 13-18 (TAVGKT) is a substrate binding site. The tract at residues 36–39 (DSQQ) is interaction with substrate tRNA.

This sequence belongs to the IPP transferase family. As to quaternary structure, monomer. The cofactor is Mg(2+).

It catalyses the reaction adenosine(37) in tRNA + dimethylallyl diphosphate = N(6)-dimethylallyladenosine(37) in tRNA + diphosphate. In terms of biological role, catalyzes the transfer of a dimethylallyl group onto the adenine at position 37 in tRNAs that read codons beginning with uridine, leading to the formation of N6-(dimethylallyl)adenosine (i(6)A). The sequence is that of tRNA dimethylallyltransferase from Streptococcus pyogenes serotype M6 (strain ATCC BAA-946 / MGAS10394).